Consider the following 204-residue polypeptide: Somatotropin (204 aa).

Residues 1-17 (MERAVLLLSLLSLGVSS) form the signal peptide. At glutamine 18 the chain carries Pyrrolidone carboxylic acid. Histidine 36 contributes to the Zn(2+) binding site. An intrachain disulfide couples cysteine 69 to cysteine 177. Residue glutamate 186 participates in Zn(2+) binding. Cysteine 194 and cysteine 202 are disulfide-bonded.

Belongs to the somatotropin/prolactin family.

Its subcellular location is the secreted. In terms of biological role, growth hormone plays an important role in growth control and involved in the regulation of several anabolic processes. The chain is Somatotropin (gh) from Perca flavescens (American yellow perch).